Reading from the N-terminus, the 421-residue chain is Histidine--tRNA ligase (421 aa).

The protein belongs to the class-II aminoacyl-tRNA synthetase family. In terms of assembly, homodimer.

It localises to the cytoplasm. It catalyses the reaction tRNA(His) + L-histidine + ATP = L-histidyl-tRNA(His) + AMP + diphosphate + H(+). The polypeptide is Histidine--tRNA ligase (Coxiella burnetii (strain CbuG_Q212) (Coxiella burnetii (strain Q212))).